We begin with the raw amino-acid sequence, 314 residues long: tRNA pseudouridine synthase B (314 aa).

Asp47 functions as the Nucleophile in the catalytic mechanism.

It belongs to the pseudouridine synthase TruB family. Type 1 subfamily.

It catalyses the reaction uridine(55) in tRNA = pseudouridine(55) in tRNA. In terms of biological role, responsible for synthesis of pseudouridine from uracil-55 in the psi GC loop of transfer RNAs. This chain is tRNA pseudouridine synthase B, found in Vibrio parahaemolyticus serotype O3:K6 (strain RIMD 2210633).